The chain runs to 131 residues: Profilin-2 (131 aa).

Belongs to the profilin family. As to quaternary structure, occurs in many kinds of cells as a complex with monomeric actin in a 1:1 ratio.

It is found in the cytoplasm. The protein localises to the cytoskeleton. Binds to actin and affects the structure of the cytoskeleton. At high concentrations, profilin prevents the polymerization of actin, whereas it enhances it at low concentrations. By binding to PIP2, it inhibits the formation of IP3 and DG. In Ambrosia artemisiifolia (Common ragweed), this protein is Profilin-2.